A 195-amino-acid chain; its full sequence is ATP-dependent Clp protease proteolytic subunit (195 aa).

Residue Ser-98 is the Nucleophile of the active site. His-123 is an active-site residue.

This sequence belongs to the peptidase S14 family. In terms of assembly, fourteen ClpP subunits assemble into 2 heptameric rings which stack back to back to give a disk-like structure with a central cavity, resembling the structure of eukaryotic proteasomes.

The protein resides in the cytoplasm. It catalyses the reaction Hydrolysis of proteins to small peptides in the presence of ATP and magnesium. alpha-casein is the usual test substrate. In the absence of ATP, only oligopeptides shorter than five residues are hydrolyzed (such as succinyl-Leu-Tyr-|-NHMec, and Leu-Tyr-Leu-|-Tyr-Trp, in which cleavage of the -Tyr-|-Leu- and -Tyr-|-Trp bonds also occurs).. Cleaves peptides in various proteins in a process that requires ATP hydrolysis. Has a chymotrypsin-like activity. Plays a major role in the degradation of misfolded proteins. This Staphylococcus aureus (strain Mu3 / ATCC 700698) protein is ATP-dependent Clp protease proteolytic subunit.